Reading from the N-terminus, the 795-residue chain is MKKLGRIHPNRQVLAFILMVFLSQVRLEPIRYSVLEETESGSFVAHLTKDLGLGIGELASRSARVLSDDDEQRLQLDRQTGDLLLREKLDREELCGPIEPCVLHFQVFLEMPVQFFQGELLIQDINDHSPVFPEREVLLKILENSQPGTLFPLLIAEDLDVGSNGLQKYTISPNSHFHILTRNHSEGKKYPDLVQDKPLDREEQPEFSLTLVALDGGSPPRSGTVMVRILIMDINDNAPEFVHTPYGVQVLENSPLDSPIVRVLARDIDAGNFGSVSYGLFQASDEIKQTFSINEVTGEILLKKKLDFEKIKSYHVEIEATDGGGLSGKGTVVIEVVDVNDNPPELIISSLTSSIPENAPETVVSIFRIRDRDSGENGKMICSIPDNLPFILKPTLKNFYTLVTERPLDRETSAEYNITITVTDLGTPRLKTQQSITVQVSDVNDNAPAFAQTSYTLFVRENNSPALHIGSVSATDRDSGTNAQVTYSLLPPQDPHLPLSSLVSINADNGHLFALRSLDYEALQAFEFRVGASDRGSPALSSEALVRVLVLDANDNSPFVLYPLQNGSAPCTELVPRAAEPGYLVTKVVAVDGDSGQNAWLSYQLLKATEPGLFGVWAHNGEVRTARLLSERDAAKHRLVVLVKDNGEPPRSATATLHVLLVDGFSQPYLPLPEAAPAQSQADSLTVYLVVALASVSSLFLFSVLLFVAVRLCRRSRAASVGRCSVPEGPFPGHLVDVSGTGTLSQSYQYEVCLTGDSGTGEFKFLKPIFPNLLVQDTGREVKENPKFRNSLVFS.

The N-terminal stretch at 1 to 27 (MKKLGRIHPNRQVLAFILMVFLSQVRL) is a signal peptide. At 28–689 (EPIRYSVLEE…SQADSLTVYL (662 aa)) the chain is on the extracellular side. Cadherin domains follow at residues 34-132 (VLEE…SPVF), 137-241 (VLLK…APEF), 246-346 (YGVQ…PPEL), 351-450 (LTSS…APAF), and 455-560 (YTLF…SPFV). Residue Asn-183 is glycosylated (N-linked (GlcNAc...) asparagine). N-linked (GlcNAc...) asparagine glycosylation is present at Asn-417. Residue Asn-566 is glycosylated (N-linked (GlcNAc...) asparagine). The 104-residue stretch at 567–670 (GSAPCTELVP…LVDGFSQPYL (104 aa)) folds into the Cadherin 6 domain. A helical membrane pass occupies residues 690 to 710 (VVALASVSSLFLFSVLLFVAV). The Cytoplasmic segment spans residues 711–795 (RLCRRSRAAS…PKFRNSLVFS (85 aa)).

The protein localises to the cell membrane. In terms of biological role, potential calcium-dependent cell-adhesion protein. May be involved in the establishment and maintenance of specific neuronal connections in the brain. This is Protocadherin beta-4 (PCDHB4) from Pan troglodytes (Chimpanzee).